Consider the following 310-residue polypeptide: Protoheme IX farnesyltransferase 2 (310 aa).

9 helical membrane-spanning segments follow: residues 25–45 (PGII…AAKG), 49–69 (LVLM…GCAI), 87–107 (RVTV…LALG), 120–139 (ALAL…VYSL), 145–165 (SVYG…VGYC), 176–196 (AILL…IAIF), 220–240 (LHIV…PLAG), 242–262 (TGIA…AMAL), and 277–297 (QVFG…ALDF).

It belongs to the UbiA prenyltransferase family. Protoheme IX farnesyltransferase subfamily.

Its subcellular location is the cell inner membrane. The enzyme catalyses heme b + (2E,6E)-farnesyl diphosphate + H2O = Fe(II)-heme o + diphosphate. It functions in the pathway porphyrin-containing compound metabolism; heme O biosynthesis; heme O from protoheme: step 1/1. In terms of biological role, converts heme B (protoheme IX) to heme O by substitution of the vinyl group on carbon 2 of heme B porphyrin ring with a hydroxyethyl farnesyl side group. This chain is Protoheme IX farnesyltransferase 2, found in Shewanella baltica (strain OS185).